The sequence spans 2173 residues: Mediator of DNA damage checkpoint protein 1 (2173 aa).

Residues 1 to 19 are compositionally biased toward acidic residues; the sequence is MEDTQAIDWDVEEEEETEQ. The tract at residues 1–22 is disordered; the sequence is MEDTQAIDWDVEEEEETEQSSE. The tract at residues 1 to 150 is interaction with CHEK2; the sequence is MEDTQAIDWD…SRGPLTVEET (150 aa). Residues 2–222 are interaction with the MRN complex; sequence EDTQAIDWDV…PFAFNLNSDT (221 aa). Phosphothreonine is present on threonine 4. One can recognise an FHA domain in the interval 54–105; that stretch reads NVVGRMPDCSVALPFPSISKQHAEIEILAWDKAPILRDCGSLNGTQILRPPK. At serine 108 the chain carries Phosphoserine. The required for nuclear localization (NLS1) stretch occupies residues 145-570; that stretch reads LTVEETPRVQ…PAKLLVVSLE (426 aa). Threonine 146 carries the phosphothreonine modification. 4 positions are modified to phosphoserine: serine 168, serine 176, serine 198, and serine 220. The tract at residues 198-320 is disordered; sequence SDEEGHSPVL…PPGRPAEVHL (123 aa). Threonine 222 carries the post-translational modification Phosphothreonine. Residues 227–244 show a composition bias toward low complexity; that stretch reads GQQSATEEASSAARRGAT. The span at 259-276 shows a compositional bias: basic and acidic residues; it reads QLEKDQPSVKERDNDTKV. The residue at position 301 (serine 301) is a Phosphoserine. Residue threonine 303 is modified to Phosphothreonine. The span at 308 to 320 shows a compositional bias: basic and acidic residues; that stretch reads DSRPPGRPAEVHL. Residue serine 331 is modified to Phosphoserine. At threonine 333 the chain carries Phosphothreonine. The interval 359–383 is disordered; that stretch reads GTRGPGAPGLSHLQESQAGSDTDVE. Phosphoserine occurs at positions 374 and 378. Residue threonine 380 is modified to Phosphothreonine. Serine 396, serine 399, and serine 404 each carry phosphoserine. Threonine 406 carries the phosphothreonine modification. Phosphoserine is present on serine 413. A disordered region spans residues 444 to 515; that stretch reads LQRSQTTTGR…SSPGIHLERS (72 aa). A Phosphothreonine modification is found at threonine 451. Residue serine 455 is modified to Phosphoserine. The residue at position 457 (threonine 457) is a Phosphothreonine. Residues serine 487, serine 497, serine 500, serine 506, serine 507, and serine 515 each carry the phosphoserine modification. Threonine 525 bears the Phosphothreonine mark. Serine 592 bears the Phosphoserine mark. A Glycyl lysine isopeptide (Lys-Gly) (interchain with G-Cter in SUMO1); alternate cross-link involves residue lysine 618. Lysine 618 participates in a covalent cross-link: Glycyl lysine isopeptide (Lys-Gly) (interchain with G-Cter in SUMO2); alternate. Serine 631 is modified (phosphoserine). Disordered stretches follow at residues 652 to 697 and 773 to 1770; these read VDTD…EDPD and HLEA…TLRS. Over residues 673 to 687 the composition is skewed to basic and acidic residues; the sequence is GREREQHVGRTKDSE. Positions 688–697 are enriched in acidic residues; the sequence is DNCDDSEDPD. Serine 782 and serine 795 each carry phosphoserine. Lysine 814 carries the post-translational modification N6-acetyllysine. Composition is skewed to basic and acidic residues over residues 821 to 846, 853 to 864, 870 to 903, and 916 to 953; these read ETAE…ERQT, ELTRGIQDREQK, DTQR…KEIQ, and AFER…RGEP. 5 positions are modified to phosphoserine: serine 957, serine 1000, serine 1035, serine 1070, and serine 1088. Residues 957-969 show a composition bias toward polar residues; the sequence is SQDQKGQASSPTS. Residues 1079–1090 show a composition bias toward basic and acidic residues; sequence TIRKTGQDRSQE. Residues 1105-1115 are compositionally biased toward basic residues; that stretch reads PKPKIITRKSS. The segment covering 1131 to 1156 has biased composition (polar residues); the sequence is PSTSTAQPVTPKPTSQATRSRTNRSS. The segment at 1150–1694 is interaction with the PRKDC complex; the sequence is SRTNRSSVKT…KNRSSVKTPE (545 aa). The span at 1157-1169 shows a compositional bias: low complexity; it reads VKTPEPVVPTVPE. Phosphothreonine is present on threonine 1159. Residues 1171 to 1189 are compositionally biased toward polar residues; the sequence is QPSTSTDQPVASEPTSQAT. Residue threonine 1200 is modified to Phosphothreonine. At serine 1237 the chain carries Phosphoserine. A phosphothreonine mark is found at threonine 1241, threonine 1282, and threonine 1304. Residues 1280–1292 are compositionally biased toward low complexity; it reads VKTPEPVVPTVPE. The span at 1294 to 1320 shows a compositional bias: polar residues; that stretch reads QPSTSTDQPVTSEPTSQATRGRTNRSS. Residues 1321–1333 show a composition bias toward low complexity; the sequence is VKTPEPVVPTVPE. Over residues 1335 to 1353 the composition is skewed to polar residues; that stretch reads QPSTSTDQPVASEPTSQAT. Over residues 1390-1402 the composition is skewed to low complexity; that stretch reads TSRTTRSRTNMSS. Composition is skewed to polar residues over residues 1418–1434, 1456–1487, 1499–1527, and 1540–1559; these read PSTS…TYQP, KLQS…SVKS, QPST…SSVK, and QPST…QATR. Phosphoserine occurs at positions 1483 and 1484. N6-acetyllysine is present on lysine 1486. 2 positions are modified to phosphothreonine: threonine 1509 and threonine 1550. Over residues 1567-1578 the composition is skewed to low complexity; it reads VKTPKIVVPTVP. A compositionally biased stretch (polar residues) spans 1581–1598; that stretch reads QASTSTDQPVTSEPTSRT. Phosphothreonine is present on residues threonine 1617 and threonine 1632. Positions 1626 to 1639 are enriched in polar residues; the sequence is STDQPITPKPTSRA. Position 1648 is a phosphoserine (serine 1648). Threonine 1651 and threonine 1673 each carry phosphothreonine. Residues 1664–1680 are compositionally biased toward polar residues; that stretch reads PSTSRSQLVTPEPTSRA. At serine 1688 the chain carries Phosphoserine. Phosphothreonine is present on residues threonine 1692, threonine 1714, threonine 1748, and threonine 1755. The segment covering 1705 to 1721 has biased composition (polar residues); it reads PTTSTDQPVTPKPTSRA. The segment covering 1761-1770 has biased composition (polar residues); the sequence is QGSQSKTLRS. At serine 1765 the chain carries Phosphoserine. Residue threonine 1781 is modified to Phosphothreonine. The interval 1782-2173 is required for nuclear localization (NLS2); sequence PEFQSPVTTD…VLSPLEMSST (392 aa). A phosphoserine mark is found at serine 1786 and serine 1795. Residues 1809–1971 form a disordered region; that stretch reads RATGNPGSLT…NRSLRRTKLN (163 aa). A Glycyl lysine isopeptide (Lys-Gly) (interchain with G-Cter in SUMO2) cross-link involves residue lysine 1824. A Phosphoserine modification is found at serine 1859. Lysine 1874 is covalently cross-linked (Glycyl lysine isopeptide (Lys-Gly) (interchain with G-Cter in SUMO2)). Threonine 1884 is modified (phosphothreonine). A Phosphoserine modification is found at serine 1904. The span at 1907 to 1920 shows a compositional bias: polar residues; the sequence is HQKQPQRGEVSQKT. Lysine 1924 is covalently cross-linked (Glycyl lysine isopeptide (Lys-Gly) (interchain with G-Cter in SUMO1); alternate). Lysine 1924 is covalently cross-linked (Glycyl lysine isopeptide (Lys-Gly) (interchain with G-Cter in SUMO2); alternate). The span at 1931 to 1941 shows a compositional bias: basic and acidic residues; it reads AEKPGKEEDVM. Threonine 1942 is subject to Phosphothreonine. BRCT domains follow at residues 1976–2054 and 2075–2166; these read APKV…EYVV and RERR…FVLS. At arginine 2027 the chain carries Omega-N-methylarginine.

In terms of assembly, homodimer. Interacts with H2AX, which requires phosphorylation of H2AX on 'Ser-139'. Interacts with the MRN complex, composed of MRE11, RAD50, and NBN. Interacts with CHEK2, which requires ATM-mediated phosphorylation of 'Thr-68' within the FHA domain of CHEK2. Interacts constitutively with the BRCA1-BARD1 complex, SMC1A and TP53BP1. Interacts with ATM and FANCD2, and these interactions are reduced upon DNA damage. Also interacts with the PRKDC complex, composed of XRCC6/KU70, XRCC5/KU80 and PRKDC/XRCC7. This interaction may be required for PRKDC autophosphorylation, which is essential for DNA double strand break (DSB) repair. When phosphorylated by ATM, interacts with RNF8 (via FHA domain). Interacts with CEP164. When phosphorylated, interacts with APTX (via FHA-like domain). Interacts (when phosphorylated) with TOPBP1; promoting TOPBP1 localization to DNA damage sites during mitosis. Interacts (when phosphorylated) with NBN; promoting NBN and MRN complex localization to DNA damage sites. Post-translationally, phosphorylated upon exposure to ionizing radiation (IR), ultraviolet radiation (UV), and hydroxyurea (HU). Phosphorylation in response to IR requires ATM, NBN, and possibly CHEK2. Also phosphorylated during the G2/M phase of the cell cycle and during activation of the mitotic spindle checkpoint. Phosphorylation at Thr-4 by ATM stabilizes and enhances homodimerization via the FHA domain. Phosphorylated at Ser-168 and Ser-198 by CK2 in response to DNA damage during mitosis, promoting interaction with TOPBP1. Phosphorylated by CK2 in response to DNA damage, promoting interaction with NBN and recruitment of the MRN complex to DNA damage sites. In terms of processing, sumoylation at Lys-1924 by PIAS4 following DNA damage promotes ubiquitin-mediated degradation. Ubiquitinated by RNF4, leading to proteasomal degradation; undergoes 'Lys-48'-linked polyubiquitination.

It is found in the nucleus. It localises to the chromosome. Histone reader protein required for checkpoint-mediated cell cycle arrest in response to DNA damage within both the S phase and G2/M phases of the cell cycle. Specifically recognizes and binds histone H2AX phosphorylated at 'Ser-139', a marker of DNA damage, serving as a scaffold for the recruitment of DNA repair and signal transduction proteins to discrete foci of DNA damage sites. Also required for downstream events subsequent to the recruitment of these proteins. These include phosphorylation and activation of the ATM, CHEK1 and CHEK2 kinases, and stabilization of TP53/p53 and apoptosis. ATM and CHEK2 may also be activated independently by a parallel pathway mediated by TP53BP1. Required for chromosomal stability during mitosis by promoting recruitment of TOPBP1 to DNA double strand breaks (DSBs): TOPBP1 forms filamentous assemblies that bridge MDC1 and tether broken chromosomes during mitosis. Required for the repair of DSBs via homologous recombination by promoting recruitment of NBN component of the MRN complex to DSBs. This chain is Mediator of DNA damage checkpoint protein 1 (MDC1), found in Macaca mulatta (Rhesus macaque).